Reading from the N-terminus, the 114-residue chain is Large ribosomal subunit protein uL22 (114 aa).

Belongs to the universal ribosomal protein uL22 family. Part of the 50S ribosomal subunit.

Functionally, this protein binds specifically to 23S rRNA; its binding is stimulated by other ribosomal proteins, e.g. L4, L17, and L20. It is important during the early stages of 50S assembly. It makes multiple contacts with different domains of the 23S rRNA in the assembled 50S subunit and ribosome. The globular domain of the protein is located near the polypeptide exit tunnel on the outside of the subunit, while an extended beta-hairpin is found that lines the wall of the exit tunnel in the center of the 70S ribosome. The protein is Large ribosomal subunit protein uL22 of Streptococcus thermophilus (strain CNRZ 1066).